The chain runs to 500 residues: Lysine--tRNA ligase (500 aa).

Residues E410 and E417 each coordinate Mg(2+).

This sequence belongs to the class-II aminoacyl-tRNA synthetase family. In terms of assembly, homodimer. Mg(2+) serves as cofactor.

The protein localises to the cytoplasm. It catalyses the reaction tRNA(Lys) + L-lysine + ATP = L-lysyl-tRNA(Lys) + AMP + diphosphate. This chain is Lysine--tRNA ligase, found in Mycoplasma mycoides subsp. mycoides SC (strain CCUG 32753 / NCTC 10114 / PG1).